The following is an 819-amino-acid chain: MDSTTNSDSPILDPNPEDVEKLLDESEEESEDQSTERLLPSELFILPLNKRPFFPGMAAPILIESGPYYEVLKVLAKSSQKYIGLVLTKKENADILKVSFNQLHKTGVAARILRIMPIEGGSAQVLLSIEERIRIIEPIKDKYLKARVSYHADNKELTEELKAYSISIVSVIKDLLKLNPLFKEELQIFLGHSDFTEPGKLADFSVALTTATREELQEVLETTNMHDRIDKALILLKKELDLSRLQSSINQKIEATITKSQKEFFLKEQLKTIKKELGLEKEDRAIDIEKFSERLRKRHVPDYAMEVIQDEIEKLQTLETSSAEYTVCRNYLDWLTIIPWGIQSKEYHDLKKAEIVLNKDHYGLDEIKQRILELISVGKLSKGLKGSIICLVGPPGVGKTSIGRSIAKVLHRKFFRFSVGGMRDEAEIKGHRRTYIGAMPGKMVQALKQSQAMNPVIMIDEVDKIGASYHGDPASALLEVLDPEQNKDFLDHYLDVRVDLSNVLFILTANVLDTIPDPLLDRMEILRLSGYILEEKLQIAKKYLVPKARKEIGLTASEVNFQPEALKYMINNYAREAGVRTLNGNIKKVLRKVALKIVQNQEKPKSKKITFKISSKNLQTYLGKPIFSSDRFYESTPVGVATGLAWTSLGGATLYIESVQVSSLKTDMHLTGQAGEVMKESSQIAWTYLHSALHRYAPGYTFFPKSQVHIHIPEGATPKDGPSAGITMVTSLLSLLLETPVVNNLGMTGEITLTGRVLGVGGIREKLIAARRSRLNILIFPEDNRRDYEELPAYLKTGLKIHFVSHYDDVLKVAFPKLK.

The interval 1–36 (MDSTTNSDSPILDPNPEDVEKLLDESEEESEDQSTE) is disordered. The 198-residue stretch at 43 to 240 (LFILPLNKRP…KALILLKKEL (198 aa)) folds into the Lon N-terminal domain. An ATP-binding site is contributed by 393–400 (GPPGVGKT). Residues 635 to 817 (STPVGVATGL…DDVLKVAFPK (183 aa)) form the Lon proteolytic domain. Catalysis depends on residues serine 723 and lysine 766.

Belongs to the peptidase S16 family. In terms of assembly, homohexamer. Organized in a ring with a central cavity.

It localises to the cytoplasm. It catalyses the reaction Hydrolysis of proteins in presence of ATP.. ATP-dependent serine protease that mediates the selective degradation of mutant and abnormal proteins as well as certain short-lived regulatory proteins. Required for cellular homeostasis and for survival from DNA damage and developmental changes induced by stress. Degrades polypeptides processively to yield small peptide fragments that are 5 to 10 amino acids long. Binds to DNA in a double-stranded, site-specific manner. The protein is Lon protease of Chlamydia pneumoniae (Chlamydophila pneumoniae).